We begin with the raw amino-acid sequence, 420 residues long: Tyrosine--tRNA ligase (420 aa).

Tyr33 contributes to the L-tyrosine binding site. The 'HIGH' region motif lies at 38-47; the sequence is PTADSLHVGH. Tyr167 and Gln171 together coordinate L-tyrosine. The short motif at 227–231 is the 'KMSKS' region element; that stretch reads KFGKT. Lys230 lines the ATP pocket. Positions 353–419 constitute an S4 RNA-binding domain; the sequence is LTVADLLVKV…GKRNYALVKV (67 aa).

The protein belongs to the class-I aminoacyl-tRNA synthetase family. TyrS type 1 subfamily. Homodimer.

Its subcellular location is the cytoplasm. It carries out the reaction tRNA(Tyr) + L-tyrosine + ATP = L-tyrosyl-tRNA(Tyr) + AMP + diphosphate + H(+). Catalyzes the attachment of tyrosine to tRNA(Tyr) in a two-step reaction: tyrosine is first activated by ATP to form Tyr-AMP and then transferred to the acceptor end of tRNA(Tyr). The polypeptide is Tyrosine--tRNA ligase (Anaeromyxobacter dehalogenans (strain 2CP-1 / ATCC BAA-258)).